Consider the following 911-residue polypeptide: MVSLLKKLIGSRNDRLLKEYRKQVAQINSLEPKISALSDEELLAKTQEFRDRHQQGTSLDDLLPEAFAVVREAGKRVFGMRHFDVQMLGGIALHNGKIAEMRTGEGKTLMATLPVYLNAIAGKGVHVVTVNDYLARRDAEWMGRLYRFLGMSTGVVVPQQPNDEKIAAYAADITYGTNNEFGFDYLRDNMEYRVEDRRQRRLFYAIVDEVDSILIDEARTPLIISGQAEDHTELYVRMNAVPPLLKRMASEPKPHEPEPEGDYWVDEKSQQVYMSEAGHESAEKILTRVGLLPEGESLYDPRHIALMHHMMVALRAHTLFFRDQQYVVQDDEVVIVDEFTGRLMVGRRWSDGLHQAVEAKEGVKIQHENQTLASITFQNYFRMYDKLSGMTGTADTEAYEFQEIYTLETVIIPTNKPMVRKDQNDQVFKTTQEKYQAILNDIRDCHERGQPVLVGTTSIENSELLAGLLRQAKLPHEVLNAKQHAREAEIVAEAGKPGHITIATNMAGRGTDIVLGGSVDKQVDLIHANEALSEAEKEVRIETLRAEWKPLNERVKQAGGLRIIGTERHESRRIDNQLRGRAGRQGDPGSSRFYLSLEDPLMRIFAGDRVRAIMERLKLPEGEPIEAGMVTRSIETAQRKVEGRNFDIRKQLLEYDDVANDQRKVLYSQRNEVLEAASIGATVEGLRDAAVAEMFRGFIPEESVEEQWDVAGLEKALAGDWHIQLPLTDMLEQEPNLTDEELLERVVAAARQIYTAKVEQVGAESWAQFERSIMLQSIDTHWREHLSALDYLRQGIHLRGYAQKNPKQEYKREAFELFSGMLDRIRDDVVRVLMTVRVQSAEQVEQAEADAAQRHVQNVQYHHSDYDEALADDGQPQGAQPVRNVLPKVGRNEPCPCGSGKKYKHCHGQLA.

ATP contacts are provided by residues Gln86, Gly104 to Thr108, and Asp512. Residues Ala869–Lys888 are disordered. Positions 895, 897, 906, and 907 each coordinate Zn(2+).

This sequence belongs to the SecA family. As to quaternary structure, monomer and homodimer. Part of the essential Sec protein translocation apparatus which comprises SecA, SecYEG and auxiliary proteins SecDF-YajC and YidC. The cofactor is Zn(2+).

It localises to the cell inner membrane. Its subcellular location is the cytoplasm. It carries out the reaction ATP + H2O + cellular proteinSide 1 = ADP + phosphate + cellular proteinSide 2.. Its function is as follows. Part of the Sec protein translocase complex. Interacts with the SecYEG preprotein conducting channel. Has a central role in coupling the hydrolysis of ATP to the transfer of proteins into and across the cell membrane, serving both as a receptor for the preprotein-SecB complex and as an ATP-driven molecular motor driving the stepwise translocation of polypeptide chains across the membrane. The sequence is that of Protein translocase subunit SecA from Bordetella parapertussis (strain 12822 / ATCC BAA-587 / NCTC 13253).